Here is a 262-residue protein sequence, read N- to C-terminus: MPGSSSRSSLAHLRNRLSECSDLQSLYEVAVLLAISRRLRSSLVSRSLSCVSKQKLIAELTGKDPDAFICMAVSLRWSEPIDLLYAFEEMFIRASCTRRFADCRDFLDELFWVSSIVDSHKILDKTLSARFLPAYSKKQLISGVFAGAHEGTLAVLEYFACYMQKKRAFRECVFFAEKIVADELGAQIADVTTERPLSREQRDELVDVLSRRFKRRIILREVINEKVFGGVRVQVNHSVIDDTVAVHLNNLALSFGALETFS.

It belongs to the ATPase delta chain family. F-type ATPases have 2 components, F(1) - the catalytic core - and F(0) - the membrane proton channel. F(1) has five subunits: alpha(3), beta(3), gamma(1), delta(1), epsilon(1). F(0) has three main subunits: a(1), b(2) and c(10-14). The alpha and beta chains form an alternating ring which encloses part of the gamma chain. F(1) is attached to F(0) by a central stalk formed by the gamma and epsilon chains, while a peripheral stalk is formed by the delta and b chains.

It localises to the cell membrane. In terms of biological role, f(1)F(0) ATP synthase produces ATP from ADP in the presence of a proton or sodium gradient. F-type ATPases consist of two structural domains, F(1) containing the extramembraneous catalytic core and F(0) containing the membrane proton channel, linked together by a central stalk and a peripheral stalk. During catalysis, ATP synthesis in the catalytic domain of F(1) is coupled via a rotary mechanism of the central stalk subunits to proton translocation. Its function is as follows. This protein is part of the stalk that links CF(0) to CF(1). It either transmits conformational changes from CF(0) to CF(1) or is implicated in proton conduction. The polypeptide is ATP synthase subunit delta (Tropheryma whipplei (strain TW08/27) (Whipple's bacillus)).